Here is a 508-residue protein sequence, read N- to C-terminus: p-aminobenzoyl-glutamate transport protein (508 aa).

13 consecutive transmembrane segments (helical) span residues 30 to 50 (FLLFIYLIIVLMVTTAILSAF), 85 to 105 (FSGFAPLGAILALVLGAGLAE), 121 to 139 (VNARYASYMVLFIAFFSHI), 140 to 159 (SSDAALVIMPPMGALIFLAV), 164 to 184 (VAGLLAAIAGVGCGFTANLLI), 211 to 231 (IDNWYFMASSVVVLTIVGGLI), 261 to 281 (GLRIAGVVSLLFIAAIALMVI), 303 to 323 (GIVPLIILFFFVVSLAYGIAT), 343 to 363 (MAGFIVMVFPLAQFVAMFNWS), 382 to 402 (LSGIPAFVGLALLSSFLCMFI), 405 to 425 (GSAIWSILAPIFVPMFMLLGF), 439 to 459 (SSVLPLAPVSPFVPLFLGFLQ), and 479 to 499 (LIFLVVWLLMLLAWYLVGLPI).

The protein localises to the cell inner membrane. It catalyses the reaction N-(4-aminobenzoyl)-L-glutamate(in) + H(+)(in) = N-(4-aminobenzoyl)-L-glutamate(out) + H(+)(out). Completely inhibited by 100 nM sodium azide and by the proton ionophore carbonyl cyanide m-chlorophenylhydrazone (CCCP). Is also strongly inhibited by 100 mM potassium fluoride. Its function is as follows. Essential for aminobenzoyl-glutamate utilization. It catalyzes the concentration-dependent uptake of p-aminobenzoyl-glutamate (PABA-GLU) into the cell and allows accumulation of PABA-GLU to a concentration enabling AbgAB to catalyze cleavage into p-aminobenzoate and glutamate. It also seems to increase the sensitivity to low levels of aminobenzoyl-glutamate. May actually serve physiologically as a transporter for some other molecule, perhaps a dipeptide, and that it transports p-aminobenzoyl-glutamate as a secondary activity. The physiological role of abgABT should be clarified. This is p-aminobenzoyl-glutamate transport protein from Escherichia coli (strain K12).